Reading from the N-terminus, the 214-residue chain is Ras-related protein Rab-11A (214 aa).

GTP is bound by residues 20-28 (GDSGVGKSN), 39-45 (SLETKST), 68-72 (DTAGQ), 126-129 (NKSD), and 156-158 (SAL). The Effector region motif lies at 42–50 (TKSTIGVEF). S-geranylgeranyl cysteine attachment occurs at residues Cys-213 and Cys-214.

It belongs to the small GTPase superfamily. Rab family.

Its subcellular location is the contractile vacuole membrane. In terms of biological role, required for normal contractile vacuole structure and function. Cells expressing a dominant negative rab11A exhibit a more extensive contractile vacuole network and enlarged contractile vacuole bladders. These cells exhibit a functional defect in osmotic regulation where cells immersed in water become rounded and detach from the surface, and contain swollen contractile vacuoles. This chain is Ras-related protein Rab-11A (rab11A), found in Dictyostelium discoideum (Social amoeba).